We begin with the raw amino-acid sequence, 566 residues long: Proline--tRNA ligase (566 aa).

The protein belongs to the class-II aminoacyl-tRNA synthetase family. ProS type 1 subfamily. As to quaternary structure, homodimer.

The protein resides in the cytoplasm. The enzyme catalyses tRNA(Pro) + L-proline + ATP = L-prolyl-tRNA(Pro) + AMP + diphosphate. In terms of biological role, catalyzes the attachment of proline to tRNA(Pro) in a two-step reaction: proline is first activated by ATP to form Pro-AMP and then transferred to the acceptor end of tRNA(Pro). As ProRS can inadvertently accommodate and process non-cognate amino acids such as alanine and cysteine, to avoid such errors it has two additional distinct editing activities against alanine. One activity is designated as 'pretransfer' editing and involves the tRNA(Pro)-independent hydrolysis of activated Ala-AMP. The other activity is designated 'posttransfer' editing and involves deacylation of mischarged Ala-tRNA(Pro). The misacylated Cys-tRNA(Pro) is not edited by ProRS. This chain is Proline--tRNA ligase, found in Bacillus cereus (strain Q1).